A 216-amino-acid polypeptide reads, in one-letter code: Uracil phosphoribosyltransferase (216 aa).

5-phospho-alpha-D-ribose 1-diphosphate-binding positions include Arg-85, Arg-110, and 135 to 143 (DPMVATGYS). Residues Ile-200 and 205-207 (GDA) contribute to the uracil site. Asp-206 serves as a coordination point for 5-phospho-alpha-D-ribose 1-diphosphate.

Belongs to the UPRTase family. Mg(2+) is required as a cofactor.

It carries out the reaction UMP + diphosphate = 5-phospho-alpha-D-ribose 1-diphosphate + uracil. Its pathway is pyrimidine metabolism; UMP biosynthesis via salvage pathway; UMP from uracil: step 1/1. With respect to regulation, allosterically activated by GTP. In terms of biological role, catalyzes the conversion of uracil and 5-phospho-alpha-D-ribose 1-diphosphate (PRPP) to UMP and diphosphate. This Paraburkholderia xenovorans (strain LB400) protein is Uracil phosphoribosyltransferase.